We begin with the raw amino-acid sequence, 85 residues long: Conotoxin Cap15b (85 aa).

Positions methionine 1 to serine 23 are cleaved as a signal peptide. Positions aspartate 24–arginine 49 are excised as a propeptide. The residue at position 50 (glutamine 50) is a Pyrrolidone carboxylic acid.

The protein belongs to the conotoxin O2 superfamily. Contains 4 disulfide bonds. In terms of tissue distribution, expressed by the venom duct.

Its subcellular location is the secreted. This Conus capitaneus (Captain cone) protein is Conotoxin Cap15b.